The sequence spans 98 residues: NADH-ubiquinone oxidoreductase chain 4L (98 aa).

Helical transmembrane passes span 1-21 (MSLT…GLLM), 29-49 (SLLC…MVIL), and 61-81 (IILL…LVMV).

The protein belongs to the complex I subunit 4L family. As to quaternary structure, core subunit of respiratory chain NADH dehydrogenase (Complex I) which is composed of 45 different subunits.

It is found in the mitochondrion inner membrane. The enzyme catalyses a ubiquinone + NADH + 5 H(+)(in) = a ubiquinol + NAD(+) + 4 H(+)(out). Core subunit of the mitochondrial membrane respiratory chain NADH dehydrogenase (Complex I) which catalyzes electron transfer from NADH through the respiratory chain, using ubiquinone as an electron acceptor. Part of the enzyme membrane arm which is embedded in the lipid bilayer and involved in proton translocation. This Vampyressa thyone (Northern little yellow-eared bat) protein is NADH-ubiquinone oxidoreductase chain 4L (MT-ND4L).